A 58-amino-acid polypeptide reads, in one-letter code: Small ribosomal subunit protein bS21 (58 aa).

The segment at 25–58 is disordered; sequence SKSGTLQEYRKREHYEKPSVKRKKKSEAARKRKF. Basic and acidic residues predominate over residues 32 to 43; that stretch reads EYRKREHYEKPS. Residues 44–58 are compositionally biased toward basic residues; the sequence is VKRKKKSEAARKRKF.

This sequence belongs to the bacterial ribosomal protein bS21 family.

This is Small ribosomal subunit protein bS21 from Oceanobacillus iheyensis (strain DSM 14371 / CIP 107618 / JCM 11309 / KCTC 3954 / HTE831).